Consider the following 262-residue polypeptide: Thrombin-like enzyme gyroxin B1.3 (262 aa).

The signal sequence occupies residues Met-1–Ala-18. The propeptide occupies Gln-19–Ser-262. The 229-residue stretch at Val-25 to Ala-253 folds into the Peptidase S1 domain. 6 disulfide bridges follow: Cys-31–Cys-165, Cys-52–Cys-68, Cys-102–Cys-260, Cys-144–Cys-214, Cys-176–Cys-193, and Cys-204–Cys-229. The Charge relay system role is filled by His-67. N-linked (GlcNAc...) asparagine glycosylation is present at Asn-105. Asp-112 acts as the Charge relay system in catalysis. The Charge relay system role is filled by Ser-208.

It belongs to the peptidase S1 family. Snake venom subfamily. In terms of assembly, monomer. As to expression, expressed by the venom gland.

The protein localises to the secreted. Functionally, thrombin-like snake venom serine protease. Displays a specificity similar to trypsin. Releases only fibrinopeptide A in the conversion of fibrinogen to fibrin. Reversibly increases the permeability of the blood brain barrier (BBB) in mice. Induces the barrel rotation syndrome in mice, which is manifested by gyroxin-like, rapid rolling motions. This syndrome may be due to its effect on BBB permeability, and certainly also to other actions affecting endogenous substrates present in the endothelium, nervous tissues or blood. Also shows a moderate inhibitory activity on the human voltage-gated potassium channel Kv10.1/KCNH1/EAG1 (58% current inhibition at 5 uM). It blocks Kv10.1/KCNH1/EAG1 in a time and dose-dependent manner and with a mechanism independent of its enzymatic activity. It may have a preference in interacting with Kv10.1/KCNH1/EAG1 in its closed state, since the inhibitory effect of the toxin is decreased at more depolarized potentials. This is Thrombin-like enzyme gyroxin B1.3 from Crotalus durissus terrificus (South American rattlesnake).